The primary structure comprises 1914 residues: Fatty acid synthase beta subunit stcK (1914 aa).

The acetyltransferase (AT) domain stretch occupies residues Leu-17–Asn-395. The enoyl reductase (ER) domain stretch occupies residues Thr-446–Asp-692. The tract at residues Gly-1009 to Ile-1509 is dehydratase (DH) domain. The 135-residue stretch at Phe-1398 to Glu-1532 folds into the MaoC-like domain. Positions Tyr-1548–Ser-1900 are malonyl/palmitoyl transferase (MT/PT) domain.

It belongs to the fungal fatty acid synthetase subunit beta family. [Alpha(6)beta(6)] hexamers of two multifunctional subunits (alpha and beta).

It catalyses the reaction acetyl-CoA + n malonyl-CoA + 2n NADPH + 4n H(+) = a long-chain-acyl-CoA + n CoA + n CO2 + 2n NADP(+).. It carries out the reaction holo-[ACP] + acetyl-CoA = acetyl-[ACP] + CoA. The catalysed reaction is holo-[ACP] + malonyl-CoA = malonyl-[ACP] + CoA. The enzyme catalyses a (3R)-hydroxyacyl-[ACP] = a (2E)-enoyl-[ACP] + H2O. It catalyses the reaction a 2,3-saturated acyl-[ACP] + NAD(+) = a (2E)-enoyl-[ACP] + NADH + H(+). It carries out the reaction (9Z)-octadecenoyl-[ACP] + H2O = (9Z)-octadecenoate + holo-[ACP] + H(+). It participates in mycotoxin biosynthesis; sterigmatocystin biosynthesis. Functionally, fatty acid synthase beta subunit; part of the gene cluster that mediates the biosynthesis of sterigmatocystin (ST), a polyketide-derived furanocoumarin which is part of the most toxic and carcinogenic compounds among the known mycotoxins. The first step in the biosynthesis of sterigmatocystin is the production of hexanoate by the fatty acid synthase (FAS) units stcJ and stcK. The polyketide backbone is assembled by the non-reducing polyketide synthase stcA by condensation of the starter hexanoyl-CoA and 7 malonyl-CoA extender units followed by cyclization and release of norsolorinic acid. Norsolorinic acid is the first stable intermediate in the biosynthesis of sterigmatocystin and is converted into averantin (AVN) by the ketoreductase stcE which reduces the hexanoate ketone to an alcohol. Averantin is then oxidized into 5'-hydroxyaverantin (HAVN) by the cytochrome P450 monooxygenase stcF. 5'-hydroxyaverantin is further converted to 5'-oxyaverantin (OAVN) by the 5'-hydroxyaverantin dehydrogenase stcG. The next step is the conversion of OAVN into averufin (AVF) which is catalyzed by a yet to be identified enzyme. The cytochrome P450 monooxygenase stcB and the flavin-binding monooxygenase stcW are both required for the conversion of averufin to 1-hydroxyversicolorone. The esterase stcI probably catalyzes the formation of versiconal hemiacetal acetate from 1-hydroxyversicolorone. The oxydoreductase stcN then probably catalyzes the biosynthetic step from versiconal to versicolorin B (VERB). The next step is performed by the versicolorin B desaturase stcL to produce versicolorin A (VERA). The ketoreductase stcU and the cytochrome P450 monooxygenase stcS are involved in the conversion of versicolorin A to demethylsterigmatocystin. The Baeyer-Villiger oxidas stcQ and the reductase stcR might be involved in the biosynthetic step from versicolorin A to demethylsterigmatocystin. The final step in the biosynthesis of sterigmatocystin is the methylation of demethylsterigmatocystin catalyzed by the methyltransferase stcP. The polypeptide is Fatty acid synthase beta subunit stcK (Emericella nidulans (strain FGSC A4 / ATCC 38163 / CBS 112.46 / NRRL 194 / M139) (Aspergillus nidulans)).